The chain runs to 262 residues: Aminoglycoside (3'') (9) adenylyltransferase (262 aa).

The enzyme catalyses streptomycin + ATP = 3''-O-adenylylstreptomycin + diphosphate. The catalysed reaction is spectinomycin + ATP = 9-O-adenylylspectinomycin + diphosphate. Its function is as follows. Mediates bacterial resistance to the antibiotics streptomycin and spectinomycin. This chain is Aminoglycoside (3'') (9) adenylyltransferase, found in Klebsiella pneumoniae.